The sequence spans 144 residues: Large ribosomal subunit protein uL15 (144 aa).

The disordered stretch occupies residues 1 to 48 (MIKLEYLQDPSPRKRRTKLLGRGPSSGHGKTSGRGHKGDGSRSGYKRR).

The protein belongs to the universal ribosomal protein uL15 family. As to quaternary structure, part of the 50S ribosomal subunit.

Functionally, binds to the 23S rRNA. The protein is Large ribosomal subunit protein uL15 of Chlamydia muridarum (strain MoPn / Nigg).